Here is a 254-residue protein sequence, read N- to C-terminus: Imidazole glycerol phosphate synthase subunit HisF (254 aa).

Catalysis depends on residues Asp-12 and Asp-131.

This sequence belongs to the HisA/HisF family. In terms of assembly, heterodimer of HisH and HisF.

Its subcellular location is the cytoplasm. The catalysed reaction is 5-[(5-phospho-1-deoxy-D-ribulos-1-ylimino)methylamino]-1-(5-phospho-beta-D-ribosyl)imidazole-4-carboxamide + L-glutamine = D-erythro-1-(imidazol-4-yl)glycerol 3-phosphate + 5-amino-1-(5-phospho-beta-D-ribosyl)imidazole-4-carboxamide + L-glutamate + H(+). The protein operates within amino-acid biosynthesis; L-histidine biosynthesis; L-histidine from 5-phospho-alpha-D-ribose 1-diphosphate: step 5/9. In terms of biological role, IGPS catalyzes the conversion of PRFAR and glutamine to IGP, AICAR and glutamate. The HisF subunit catalyzes the cyclization activity that produces IGP and AICAR from PRFAR using the ammonia provided by the HisH subunit. The sequence is that of Imidazole glycerol phosphate synthase subunit HisF from Kocuria rhizophila (strain ATCC 9341 / DSM 348 / NBRC 103217 / DC2201).